The following is a 280-amino-acid chain: MIQHAGLGYRRDLAEDFLSLSENSPICFIEAAPENWLKMGGWARKQFDRVAERLPLALHGLSMSLGGQAPLDTDLIDGIKEMMRRYDCTFFSDHLSYCHDGGHLYDLLPLPFTEEMVHHTARRIREVQDRLGCRIAVENTSYYLHSPLAEMNEVEFLNAVAREADCGIHLDVNNIYVNAVNHGLLSPEAFLENVDAERVCYIHIAGHDVETPELLIDTHGAAVLPTVWDLLELAYAKLPTIPPTLLERDFNFPPFSELEAEVAKIADYQTRAGKECRRAA.

It belongs to the UPF0276 family.

The polypeptide is UPF0276 protein NMB2142 (Neisseria meningitidis serogroup B (strain ATCC BAA-335 / MC58)).